The sequence spans 78 residues: Acyl carrier protein (78 aa).

Residues 2–77 (STIEESVKSI…AAIDFIKESK (76 aa)) enclose the Carrier domain. At Ser37 the chain carries O-(pantetheine 4'-phosphoryl)serine.

It belongs to the acyl carrier protein (ACP) family. 4'-phosphopantetheine is transferred from CoA to a specific serine of apo-ACP by AcpS. This modification is essential for activity because fatty acids are bound in thioester linkage to the sulfhydryl of the prosthetic group.

The protein resides in the cytoplasm. It participates in lipid metabolism; fatty acid biosynthesis. In terms of biological role, carrier of the growing fatty acid chain in fatty acid biosynthesis. This chain is Acyl carrier protein, found in Wigglesworthia glossinidia brevipalpis.